A 279-amino-acid chain; its full sequence is NADH dehydrogenase [ubiquinone] iron-sulfur protein 3, mitochondrial (279 aa).

The N-terminal 27 residues, 1-27, are a transit peptide targeting the mitochondrion; sequence MISRTLLKRSLPTVQFLRPFTRSSIRR. Residues 249–279 form a disordered region; sequence EPVGEGKDFTPESFKLPTPEPEPEKESDEKK. Residues 270–279 show a composition bias toward basic and acidic residues; the sequence is EPEKESDEKK.

This sequence belongs to the complex I 30 kDa subunit family. As to quaternary structure, core subunit of respiratory chain NADH dehydrogenase (Complex I).

It is found in the mitochondrion inner membrane. The catalysed reaction is a ubiquinone + NADH + 5 H(+)(in) = a ubiquinol + NAD(+) + 4 H(+)(out). Functionally, core subunit of the mitochondrial membrane respiratory chain NADH dehydrogenase (Complex I) which catalyzes electron transfer from NADH through the respiratory chain, using ubiquinone as an electron acceptor. Plays a role in cell wall integrity and is involved in osmotic and oxidative resistance, yeast to hypha transition and the ability to damage and invade oral epithelial cells. The sequence is that of NADH dehydrogenase [ubiquinone] iron-sulfur protein 3, mitochondrial (ALI1) from Candida albicans (strain SC5314 / ATCC MYA-2876) (Yeast).